Reading from the N-terminus, the 563-residue chain is (R)-mandelonitrile lyase 1 (563 aa).

Residues 1-27 (MEKSTMSAILLVLHLFVLLLQYSEVHS) form the signal peptide. FAD contacts are provided by residues 63 to 64 (TS), 82 to 83 (ER), Val129, Thr133, and 137 to 140 (NAGV). N-linked (GlcNAc...) asparagine glycosylation is found at Asn145 and Asn162. FAD is bound at residue Val244. A substrate-binding site is contributed by Cys355. Asn379 carries an N-linked (GlcNAc...) asparagine glycan. An intrachain disulfide couples Cys426 to Cys477. Tyr484 lines the substrate pocket. Residues 485 to 486 (WH) and Gly514 each bind FAD. Residue His486 is the Proton donor of the active site. The Proton acceptor role is filled by His524. Position 525 to 526 (525 to 526 (PQ)) interacts with FAD.

The protein belongs to the GMC oxidoreductase family. As to quaternary structure, monomer. FAD is required as a cofactor. In terms of processing, glycosylated. As to expression, seeds. Localized within cotyledonary parenchyma cells.

Its subcellular location is the vacuole. The protein localises to the aleurone grain. It carries out the reaction (R)-mandelonitrile = benzaldehyde + hydrogen cyanide. Functionally, involved in cyanogenesis, the release of HCN from injured tissues. Catalyzes the stereospecific addition of HCN to a variety of aldehydes in vitro. It is a major seed constituent, and could have the additional role of a storage form for reduced nitrogen. The chain is (R)-mandelonitrile lyase 1 (MDL1) from Prunus serotina (Black cherry).